A 78-amino-acid chain; its full sequence is MKSATLLALSFLLIASCFLICEAEHSRYEEHEILEENMGDVVNLEQRSCAKPGEMCMRIKCCDGQCGCNRGTGRCFCK.

An N-terminal signal peptide occupies residues 1 to 23 (MKSATLLALSFLLIASCFLICEA). A propeptide spanning residues 24 to 47 (EHSRYEEHEILEENMGDVVNLEQR) is cleaved from the precursor. 3 disulfides stabilise this stretch: cysteine 49–cysteine 62, cysteine 56–cysteine 66, and cysteine 61–cysteine 77.

It belongs to the hainantoxin family. 20 subfamily. In terms of tissue distribution, expressed by the venom gland.

It is found in the secreted. Functionally, putative ion channel inhibitor. In Cyriopagopus hainanus (Chinese bird spider), this protein is Hainantoxin-XX.3.